The following is a 187-amino-acid chain: Putative lipoprotein LppJ (187 aa).

An N-terminal signal peptide occupies residues 1-28 (MPHSTADRRLRLTRQALLAAAVVPLLAG). Residue Cys-29 is the site of N-palmitoyl cysteine attachment. Residue Cys-29 is the site of S-diacylglycerol cysteine attachment.

It is found in the cell membrane. This Mycobacterium tuberculosis (strain CDC 1551 / Oshkosh) protein is Putative lipoprotein LppJ (lppJ).